The sequence spans 411 residues: RNA binding protein fox-1 homolog 2 (411 aa).

Residues 16 to 175 form a disordered region; sequence TRGTKRESDQ…SETKASPKRL (160 aa). 2 stretches are compositionally biased toward polar residues: residues 58-83 and 99-119; these read PVSQ…TPDT and NGLS…QSTE. Residues 135 to 165 are compositionally biased toward low complexity; sequence SAPATSTANASSTTDGSQTEGQQSQSQNNEN. Residues 173-249 enclose the RRM domain; the sequence is KRLHVSNIPF…RKIEVNNATA (77 aa).

In terms of assembly, interacts with papd4/gld2.

It localises to the nucleus. Its subcellular location is the cytoplasm. Its function is as follows. RNA-binding protein that regulates alternative splicing events by binding to 5'-UGCAUGU-3' elements. Regulates alternative splicing of tissue-specific exons. The polypeptide is RNA binding protein fox-1 homolog 2 (rbfox2) (Xenopus laevis (African clawed frog)).